The following is a 317-amino-acid chain: Olfactory receptor 2B11 (317 aa).

The Extracellular portion of the chain corresponds to 1–29 (MKSDNHSFLGDSPKAFILLGVSDRPWLEL). Asn5 is a glycosylation site (N-linked (GlcNAc...) asparagine). Residues 30–53 (PLFVVLLLSYVLAMLGNVAIILAS) form a helical membrane-spanning segment. Residues 54–61 (RVDPQLHS) lie on the Cytoplasmic side of the membrane. A helical membrane pass occupies residues 62 to 83 (PMYIFLSHLSFLDLCYTTTTVP). Residues 84 to 104 (QMLVNMGSSQKTISYGGCTVQ) lie on the Extracellular side of the membrane. Cys101 and Cys193 form a disulfide bridge. Residues 105 to 124 (YAVFHWLGCTECIVLAAMAL) traverse the membrane as a helical segment. At 125–143 (DRYVAICKPLHYAVLMHRA) the chain is on the cytoplasmic side. Residues 144–162 (LCQQLVALAWLSGFGNSFV) form a helical membrane-spanning segment. Over 163–199 (QVVLTVQLPFCGRQVLNNFFCEVPAVIKLSCADTAVN) the chain is Extracellular. Residue Asn199 is glycosylated (N-linked (GlcNAc...) asparagine). The helical transmembrane segment at 200 to 223 (DTILAVLVAFFVLVPLALILLSYG) threads the bilayer. The Cytoplasmic portion of the chain corresponds to 224-240 (FIARAVLRIQSSKGRHK). Residues 241-263 (AFGTCSSHLMIVSLFYLPAIYMY) traverse the membrane as a helical segment. At 264–276 (LQPPSSYSQEQGK) the chain is on the extracellular side. The chain crosses the membrane as a helical span at residues 277–296 (FISLFYSIITPTLNPFTYTL). Residues 297–317 (RNKDMKGALRRLLARIWRLCG) are Cytoplasmic-facing.

Belongs to the G-protein coupled receptor 1 family.

It is found in the cell membrane. Odorant receptor. The protein is Olfactory receptor 2B11 (OR2B11) of Homo sapiens (Human).